Consider the following 987-residue polypeptide: Vacuolar membrane protease (987 aa).

Over 1–14 the chain is Cytoplasmic; sequence MATRKARNPLAFMP. A helical transmembrane segment spans residues 15-35; sequence WPVTILTTAMYLALIIPLLVI. Topologically, residues 36-384 are vacuolar; that stretch reads HHNVPPAPRT…AFAVFRLHTL (349 aa). Asn-51 and Asn-117 each carry an N-linked (GlcNAc...) asparagine glycan. Residues His-167 and Asp-179 each contribute to the Zn(2+) site. The active-site Proton acceptor is the Glu-213. Glu-214, Glu-239, and His-312 together coordinate Zn(2+). A helical membrane pass occupies residues 385–405; sequence FALSVTLLIVAPLTLLVTSVI. The Cytoplasmic portion of the chain corresponds to 406-435; it reads LSRADKMYLFRSSVYSEINDDYIPLRGLRG. Residues 436–456 traverse the membrane as a helical segment; the sequence is FFRFPFLISIPTGVTVGLAYM. Residues 457 to 466 lie on the Vacuolar side of the membrane; that stretch reads VTKVNPFIAH. The helical transmembrane segment at 467-487 threads the bilayer; sequence SSSYAVWSMMISAWIFLAWFV. Over 488 to 501 the chain is Cytoplasmic; that stretch reads SRVANSARPSAFHR. The chain crosses the membrane as a helical span at residues 502 to 522; sequence VYTWTWMFVLTWSLMVVCTVY. At 523-526 the chain is on the vacuolar side; that stretch reads EHEE. The helical transmembrane segment at 527–547 threads the bilayer; the sequence is GLAGGYFIFFYFAGTFLATWI. At 548–649 the chain is on the cytoplasmic side; sequence SYLELFALPT…WSGVLPRWTW (102 aa). Residues 572-600 are disordered; that stretch reads STQGSRLAASGDEHQDDAAEEDPTESTSL. A helical transmembrane segment spans residues 650–670; that stretch reads LLQLLITAPVILMLIVPLALL. Over 671–686 the chain is Vacuolar; sequence TTSALSQTGQDGSPQL. Residues 687–707 form a helical membrane-spanning segment; that stretch reads LIYLFISCLTALLFAPMLPFI. Residues 708–715 are Cytoplasmic-facing; it reads HRYTYHLP. Residues 716–736 form a helical membrane-spanning segment; sequence IFLLFVFIGTMIYNLVAFPFA. Residues 737-987 lie on the Vacuolar side of the membrane; sequence DSNRLKLFFL…KRSSLGALGS (251 aa). Residues Asn-781 and Asn-871 are each glycosylated (N-linked (GlcNAc...) asparagine).

This sequence belongs to the peptidase M28 family. Zn(2+) is required as a cofactor.

The protein localises to the vacuole membrane. May be involved in vacuolar sorting and osmoregulation. The chain is Vacuolar membrane protease from Penicillium rubens (strain ATCC 28089 / DSM 1075 / NRRL 1951 / Wisconsin 54-1255) (Penicillium chrysogenum).